The sequence spans 322 residues: Protein-L-isoaspartate O-methyltransferase (322 aa).

The disordered stretch occupies residues 1–101 (MSGERAKRFP…AKQGDRSAAP (101 aa)). The span at 14 to 29 (EDLKREPRKPEGRVAE) shows a compositional bias: basic and acidic residues. Composition is skewed to low complexity over residues 33–51 (AGDA…PAAA) and 76–91 (HAPA…PQGG). Ser170 is an active-site residue.

Belongs to the methyltransferase superfamily. L-isoaspartyl/D-aspartyl protein methyltransferase family.

Its subcellular location is the cytoplasm. The enzyme catalyses [protein]-L-isoaspartate + S-adenosyl-L-methionine = [protein]-L-isoaspartate alpha-methyl ester + S-adenosyl-L-homocysteine. In terms of biological role, catalyzes the methyl esterification of L-isoaspartyl residues in peptides and proteins that result from spontaneous decomposition of normal L-aspartyl and L-asparaginyl residues. It plays a role in the repair and/or degradation of damaged proteins. This Burkholderia pseudomallei (strain 1106a) protein is Protein-L-isoaspartate O-methyltransferase.